The sequence spans 414 residues: Protein PHLOEM PROTEIN 2-LIKE A10 (414 aa).

Transmembrane regions (helical) follow at residues 20 to 40 (WLIF…VYHL) and 379 to 399 (YVGA…LHII).

Its subcellular location is the membrane. The polypeptide is Protein PHLOEM PROTEIN 2-LIKE A10 (PP2A10) (Arabidopsis thaliana (Mouse-ear cress)).